The following is an 868-amino-acid chain: DNA mismatch repair protein MutS (868 aa).

620–627 (GPNMGGKS) lines the ATP pocket.

It belongs to the DNA mismatch repair MutS family.

Its function is as follows. This protein is involved in the repair of mismatches in DNA. It is possible that it carries out the mismatch recognition step. This protein has a weak ATPase activity. This Xylella fastidiosa (strain Temecula1 / ATCC 700964) protein is DNA mismatch repair protein MutS.